We begin with the raw amino-acid sequence, 412 residues long: Proline-rich protein 30 (412 aa).

Over residues 33-45 (HNLQPLSAHQSLR) the composition is skewed to polar residues. Disordered regions lie at residues 33 to 75 (HNLQ…QFGS), 123 to 174 (PLTP…SNRQ), and 318 to 412 (PKEV…KSSV). Low complexity-rich tracts occupy residues 126 to 142 (PSFS…PHSP) and 334 to 350 (PSPA…ADPA). Residues 353–372 (TPSQTRSFRSAGLQSPNSPR) are compositionally biased toward polar residues.

This Macaca fascicularis (Crab-eating macaque) protein is Proline-rich protein 30 (PRR30).